The following is a 640-amino-acid chain: uncharacterized protein (640 aa).

Transmembrane regions (helical) follow at residues 8–28 (GGVV…LGMF), 52–72 (LGGF…CYLI), 90–110 (LFVA…FLLA), 136–156 (LWYA…LVVL), 179–199 (VFML…LHAW), 208–228 (PSPV…YGIV), 241–261 (WWGL…VLQA), 277–297 (ENMG…DTGA), 298–318 (YGPA…HAAF), 352–372 (TVFF…AGFV), 391–411 (IVAL…GLSV), 446–466 (AIAA…APMV), 497–517 (IAPG…AVLA), and 619–639 (GSVH…LVVA).

It belongs to the complex I subunit 4 family.

Its subcellular location is the cell membrane. This is an uncharacterized protein from Mycobacterium tuberculosis (strain CDC 1551 / Oshkosh).